The following is a 116-amino-acid chain: Iron-sulfur cluster insertion protein ErpA (116 aa).

C44, C108, and C110 together coordinate iron-sulfur cluster.

This sequence belongs to the HesB/IscA family. As to quaternary structure, homodimer. Iron-sulfur cluster serves as cofactor.

Functionally, required for insertion of 4Fe-4S clusters for at least IspG. The chain is Iron-sulfur cluster insertion protein ErpA from Nitrosococcus oceani (strain ATCC 19707 / BCRC 17464 / JCM 30415 / NCIMB 11848 / C-107).